We begin with the raw amino-acid sequence, 329 residues long: GTP 3',8-cyclase (329 aa).

The Radical SAM core domain occupies 8–234 (AFARKFYYLR…QLRQRSDGPA (227 aa)). Arg17 provides a ligand contact to GTP. Residues Cys24 and Cys28 each contribute to the [4Fe-4S] cluster site. Tyr30 contributes to the S-adenosyl-L-methionine binding site. Residue Cys31 coordinates [4Fe-4S] cluster. GTP is bound at residue Arg68. Residue Gly72 participates in S-adenosyl-L-methionine binding. Thr99 lines the GTP pocket. Ser123 is a binding site for S-adenosyl-L-methionine. Lys160 is a GTP binding site. Met194 is an S-adenosyl-L-methionine binding site. [4Fe-4S] cluster is bound by residues Cys257 and Cys260. Position 262-264 (262-264 (RLR)) interacts with GTP. [4Fe-4S] cluster is bound at residue Cys274.

It belongs to the radical SAM superfamily. MoaA family. As to quaternary structure, monomer and homodimer. [4Fe-4S] cluster is required as a cofactor.

The enzyme catalyses GTP + AH2 + S-adenosyl-L-methionine = (8S)-3',8-cyclo-7,8-dihydroguanosine 5'-triphosphate + 5'-deoxyadenosine + L-methionine + A + H(+). It functions in the pathway cofactor biosynthesis; molybdopterin biosynthesis. Catalyzes the cyclization of GTP to (8S)-3',8-cyclo-7,8-dihydroguanosine 5'-triphosphate. The polypeptide is GTP 3',8-cyclase (Escherichia coli O139:H28 (strain E24377A / ETEC)).